Reading from the N-terminus, the 687-residue chain is Transcription activator of gluconeogenesis SNOG_12336 (687 aa).

The tract at residues Met-1–Arg-56 is disordered. Residues Gly-32 to Ala-45 are compositionally biased toward polar residues. The segment at residues Cys-63–Cys-91 is a DNA-binding region (zn(2)-C6 fungal-type). Polar residues-rich tracts occupy residues Pro-150–Ser-159 and His-169–Pro-179. Disordered regions lie at residues Pro-150–Phe-214, Glu-300–Arg-411, and Gly-536–Ala-561. Positions Pro-195 to Pro-212 are enriched in low complexity. The span at Glu-300–Thr-318 shows a compositional bias: polar residues. Over residues Pro-342–Ala-357 the composition is skewed to low complexity. 3 stretches are compositionally biased toward polar residues: residues Asn-362–Thr-384, Arg-392–His-402, and Met-546–Ala-561. The region spanning Asn-482 to Thr-553 is the PAS domain.

Belongs to the ERT1/acuK family.

It is found in the nucleus. Transcription factor which regulates nonfermentable carbon utilization. Activator of gluconeogenetic genes. In Phaeosphaeria nodorum (strain SN15 / ATCC MYA-4574 / FGSC 10173) (Glume blotch fungus), this protein is Transcription activator of gluconeogenesis SNOG_12336.